Consider the following 175-residue polypeptide: NADH-quinone oxidoreductase subunit B (175 aa).

Positions 49, 50, 115, and 145 each coordinate [4Fe-4S] cluster.

This sequence belongs to the complex I 20 kDa subunit family. As to quaternary structure, NDH-1 is composed of 14 different subunits. Subunits NuoB, C, D, E, F, and G constitute the peripheral sector of the complex. [4Fe-4S] cluster serves as cofactor.

The protein localises to the cell membrane. It catalyses the reaction a quinone + NADH + 5 H(+)(in) = a quinol + NAD(+) + 4 H(+)(out). Functionally, NDH-1 shuttles electrons from NADH, via FMN and iron-sulfur (Fe-S) centers, to quinones in the respiratory chain. The immediate electron acceptor for the enzyme in this species is believed to be a menaquinone. Couples the redox reaction to proton translocation (for every two electrons transferred, four hydrogen ions are translocated across the cytoplasmic membrane), and thus conserves the redox energy in a proton gradient. The protein is NADH-quinone oxidoreductase subunit B of Heliobacterium modesticaldum (strain ATCC 51547 / Ice1).